A 391-amino-acid polypeptide reads, in one-letter code: Mycofactocin maturase MftC (391 aa).

The region spanning 16-232 (LDAPICLTWE…KGERVLTGDS (217 aa)) is the Radical SAM core domain. Positions 30, 34, 37, 251, 258, 269, 310, 313, 319, 323, and 341 each coordinate [4Fe-4S] cluster. The tract at residues 340–391 (ECVQGHSEPALARERHLPRPRADHSRGRRVSKPVPLTLSMRPPKRPCNESPV) is disordered. Residues 350 to 364 (LARERHLPRPRADHS) are compositionally biased toward basic and acidic residues.

Belongs to the radical SAM superfamily. The cofactor is [4Fe-4S] cluster.

It catalyses the reaction [mycofactocin precursor peptide]-C-terminal glycyl-L-valyl-L-tyrosine + S-adenosyl-L-methionine = [mycofactocin precursor peptide]-C-terminal glycyl-N-{[2-(4-hydroxyphenyl)ethenyl]-3-methylbutanamide} + 5'-deoxyadenosine + L-methionine + CO2. It carries out the reaction [mycofactocin precursor peptide]-C-terminal glycyl-N-{[2-(4-hydroxyphenyl)ethenyl]-3-methylbutanamide} + AH2 + S-adenosyl-L-methionine = [mycofactocin precursor peptide]-C-terminal glycyl-N-{5-[(4-hydroxyphenyl)methyl]-4,4-dimethyl-2-oxopyrrolidin-3-yl}acetamide + 5'-deoxyadenosine + L-methionine + A + H(+). Radical S-adenosylmethionine (SAM) enzyme responsible for the first step of the biosynthesis of the enzyme cofactor mycofactocin (MFT). Catalyzes two reactions at the C-terminus of the mycofactocin precursor (the MftA peptide). The first one is the oxidative decarboxylation of the C-terminal L-tyrosine of MftA, forming an unsaturated tyramine moiety. The second reaction is the cross-linking of the tyramine with the penultimate L-valine residue, forming a five-membered lactam ring. Its activity requires the presence of the MftB chaperone. The protein is Mycofactocin maturase MftC (mftC) of Mycobacterium tuberculosis (strain CDC 1551 / Oshkosh).